We begin with the raw amino-acid sequence, 354 residues long: Uroporphyrinogen decarboxylase (354 aa).

Substrate contacts are provided by residues 27 to 31, phenylalanine 46, aspartate 77, tyrosine 154, threonine 209, and histidine 327; that span reads RQAGR.

It belongs to the uroporphyrinogen decarboxylase family. As to quaternary structure, homodimer.

It is found in the cytoplasm. It carries out the reaction uroporphyrinogen III + 4 H(+) = coproporphyrinogen III + 4 CO2. The protein operates within porphyrin-containing compound metabolism; protoporphyrin-IX biosynthesis; coproporphyrinogen-III from 5-aminolevulinate: step 4/4. Catalyzes the decarboxylation of four acetate groups of uroporphyrinogen-III to yield coproporphyrinogen-III. This chain is Uroporphyrinogen decarboxylase, found in Photorhabdus laumondii subsp. laumondii (strain DSM 15139 / CIP 105565 / TT01) (Photorhabdus luminescens subsp. laumondii).